The chain runs to 756 residues: Cellulose synthase catalytic subunit [UDP-forming] (756 aa).

4 consecutive transmembrane segments (helical) span residues 27-47, 49-69, 106-126, and 167-187; these read ASYI…TVTL, NNEQ…VGRG, GILG…LFLS, and LTVL…VYIL. The catalytic subdomain A stretch occupies residues 147-242; it reads DWPTVDIFIP…YILILDCDHI (96 aa). Aspartate 189 is an active-site residue. Substrate-binding residues include aspartate 238 and aspartate 240. The interval 319-379 is catalytic subdomain B; it reads EAIESIGGFA…GQRMRWARGM (61 aa). Aspartate 335 is a catalytic residue. Transmembrane regions (helical) follow at residues 409–429, 432–452, 470–490, 517–537, and 551–571; these read FFFA…LFAG, IIAA…FHSI, VYET…LLFP, NIIF…ELIV, and LLNC…IAVG. The region spanning 576-681 is the PilZ domain; it reads QVRYNHRVEA…ERDIVRFVFG (106 aa). The segment at 721–756 is disordered; sequence NSRPKKKPLALPVERREPTTIHSGQTQEGKISRAAS. Residues 740-756 are compositionally biased toward polar residues; sequence TIHSGQTQEGKISRAAS.

This sequence belongs to the glycosyltransferase 2 family. Mg(2+) is required as a cofactor.

The protein resides in the cell inner membrane. The catalysed reaction is [(1-&gt;4)-beta-D-glucosyl](n) + UDP-alpha-D-glucose = [(1-&gt;4)-beta-D-glucosyl](n+1) + UDP + H(+). It participates in glycan metabolism; bacterial cellulose biosynthesis. Activated by bis-(3'-5') cyclic diguanylic acid (c-di-GMP). Its function is as follows. Catalytic subunit of cellulose synthase. It polymerizes uridine 5'-diphosphate glucose to cellulose. The thick cellulosic mats generated by this enzyme probably provide a specialized protective environment to the bacterium. The sequence is that of Cellulose synthase catalytic subunit [UDP-forming] (bcsA) from Komagataeibacter sucrofermentans (strain ATCC 700178 / DSM 15973 / CECT 7291 / JCM 9730 / LMG 18788 / BPR 2001) (Acetobacter xylinus subsp. sucrofermentans).